A 270-amino-acid polypeptide reads, in one-letter code: Ribosomal RNA small subunit methyltransferase A (270 aa).

Positions 18, 20, 45, 66, 91, and 112 each coordinate S-adenosyl-L-methionine.

It belongs to the class I-like SAM-binding methyltransferase superfamily. rRNA adenine N(6)-methyltransferase family. RsmA subfamily.

It is found in the cytoplasm. It catalyses the reaction adenosine(1518)/adenosine(1519) in 16S rRNA + 4 S-adenosyl-L-methionine = N(6)-dimethyladenosine(1518)/N(6)-dimethyladenosine(1519) in 16S rRNA + 4 S-adenosyl-L-homocysteine + 4 H(+). In terms of biological role, specifically dimethylates two adjacent adenosines (A1518 and A1519) in the loop of a conserved hairpin near the 3'-end of 16S rRNA in the 30S particle. May play a critical role in biogenesis of 30S subunits. The chain is Ribosomal RNA small subunit methyltransferase A from Psychromonas ingrahamii (strain DSM 17664 / CCUG 51855 / 37).